The sequence spans 1465 residues: Transcriptional elongation regulator MINIYO (1465 aa).

Disordered stretches follow at residues 27-85 (KGIS…AEER), 186-211 (LNASPPLAVSNGLGTRHASSSLESDI), and 1113-1135 (TIHEDGEMSNSSTQDKKSDSSTI).

This sequence belongs to the RPAP1 family. Interacts with HAG3, NRPB3 and NRPB10L. In terms of tissue distribution, expressed in root and shoot apices and in leaf and flower primordia. Detected in the endosperm, embryo, meristems and in organ primordia, but not in mature cells. Found exclusively in the vascular bundles in mature leaves.

Its subcellular location is the cytoplasm. The protein localises to the nucleus. Functionally, positive regulator of transcriptional elongation that is essential for cells to initiate differentiation. Interacts with RNA polymerase II and the Elongator complex and is required to sustain global levels of transcriptional elongation activity, specifically in differentiating tissues. The sequence is that of Transcriptional elongation regulator MINIYO from Arabidopsis thaliana (Mouse-ear cress).